The sequence spans 415 residues: Serine hydroxymethyltransferase (415 aa).

Residues Leu-121 and 125 to 127 contribute to the (6S)-5,6,7,8-tetrahydrofolate site; that span reads GHL. At Lys-230 the chain carries N6-(pyridoxal phosphate)lysine. Residues Glu-246 and 354–356 each bind (6S)-5,6,7,8-tetrahydrofolate; that span reads SPF.

It belongs to the SHMT family. As to quaternary structure, homodimer. Requires pyridoxal 5'-phosphate as cofactor.

Its subcellular location is the cytoplasm. The enzyme catalyses (6R)-5,10-methylene-5,6,7,8-tetrahydrofolate + glycine + H2O = (6S)-5,6,7,8-tetrahydrofolate + L-serine. It functions in the pathway one-carbon metabolism; tetrahydrofolate interconversion. It participates in amino-acid biosynthesis; glycine biosynthesis; glycine from L-serine: step 1/1. Functionally, catalyzes the reversible interconversion of serine and glycine with tetrahydrofolate (THF) serving as the one-carbon carrier. This reaction serves as the major source of one-carbon groups required for the biosynthesis of purines, thymidylate, methionine, and other important biomolecules. Also exhibits THF-independent aldolase activity toward beta-hydroxyamino acids, producing glycine and aldehydes, via a retro-aldol mechanism. The protein is Serine hydroxymethyltransferase of Bdellovibrio bacteriovorus (strain ATCC 15356 / DSM 50701 / NCIMB 9529 / HD100).